The following is a 672-amino-acid chain: PHD finger protein MALE STERILITY 1 (672 aa).

The PHD-type zinc-finger motif lies at 614–664; it reads RIECECGATEEDGERMVCCDICEVWQHTRCVGVQHNEEVPRIFLCQSCDQH.

In closed flower buds, especially in anthers.

Its subcellular location is the nucleus. Functionally, transcriptional activator required for anther and post-meiotic pollen development and maturation. Seems to regulate inflorescence branching and floral development. May control tapetal development by directly regulating tapetal programmed cell death (PCD) and breakdown. Implicated in pollen cytosolic components and wall development (e.g. exine and intine formation). This chain is PHD finger protein MALE STERILITY 1 (MS1), found in Arabidopsis thaliana (Mouse-ear cress).